Reading from the N-terminus, the 21-residue chain is Nigrocin-2HSa (21 aa).

Cys15 and Cys21 are joined by a disulfide.

Expressed by the skin glands.

The protein localises to the secreted. In terms of biological role, has antibacterial activity against the Gram-positive bacterium S.aureus ATCC 25923 (MIC=56 uM) and the Gram-negative bacterium E.coli ATCC 25726 (MIC=28 uM). The sequence is that of Nigrocin-2HSa from Odorrana hosii (Hose's rock frog).